The primary structure comprises 152 residues: Cyanate hydratase (152 aa).

Catalysis depends on residues Arg-98, Glu-101, and Ser-124.

The protein belongs to the cyanase family.

It catalyses the reaction cyanate + hydrogencarbonate + 3 H(+) = NH4(+) + 2 CO2. In terms of biological role, catalyzes the reaction of cyanate with bicarbonate to produce ammonia and carbon dioxide. In Uncinocarpus reesii (strain UAMH 1704), this protein is Cyanate hydratase.